Here is an 874-residue protein sequence, read N- to C-terminus: Alanine--tRNA ligase (874 aa).

Zn(2+) contacts are provided by histidine 562, histidine 566, cysteine 664, and histidine 668.

This sequence belongs to the class-II aminoacyl-tRNA synthetase family. It depends on Zn(2+) as a cofactor.

It localises to the cytoplasm. The enzyme catalyses tRNA(Ala) + L-alanine + ATP = L-alanyl-tRNA(Ala) + AMP + diphosphate. In terms of biological role, catalyzes the attachment of alanine to tRNA(Ala) in a two-step reaction: alanine is first activated by ATP to form Ala-AMP and then transferred to the acceptor end of tRNA(Ala). Also edits incorrectly charged Ser-tRNA(Ala) and Gly-tRNA(Ala) via its editing domain. This chain is Alanine--tRNA ligase, found in Shewanella oneidensis (strain ATCC 700550 / JCM 31522 / CIP 106686 / LMG 19005 / NCIMB 14063 / MR-1).